A 94-amino-acid chain; its full sequence is Co-chaperonin GroES (94 aa).

The protein belongs to the GroES chaperonin family. In terms of assembly, heptamer of 7 subunits arranged in a ring. Interacts with the chaperonin GroEL.

The protein resides in the cytoplasm. Its function is as follows. Together with the chaperonin GroEL, plays an essential role in assisting protein folding. The GroEL-GroES system forms a nano-cage that allows encapsulation of the non-native substrate proteins and provides a physical environment optimized to promote and accelerate protein folding. GroES binds to the apical surface of the GroEL ring, thereby capping the opening of the GroEL channel. In Listeria innocua serovar 6a (strain ATCC BAA-680 / CLIP 11262), this protein is Co-chaperonin GroES.